A 61-amino-acid chain; its full sequence is Small ribosomal subunit protein uS14B (61 aa).

Zn(2+)-binding residues include Cys-24, Cys-27, Cys-40, and Cys-43.

The protein belongs to the universal ribosomal protein uS14 family. Zinc-binding uS14 subfamily. Part of the 30S ribosomal subunit. Contacts proteins S3 and S10. It depends on Zn(2+) as a cofactor.

In terms of biological role, binds 16S rRNA, required for the assembly of 30S particles and may also be responsible for determining the conformation of the 16S rRNA at the A site. This chain is Small ribosomal subunit protein uS14B, found in Kineococcus radiotolerans (strain ATCC BAA-149 / DSM 14245 / SRS30216).